The sequence spans 512 residues: Acid-sensing ion channel 2 (512 aa).

Residues 1–42 (MDLKESPSEGSLQPSSIQIFANTSTLHGIRHIFVYGPLTIRR) are Cytoplasmic-facing. Phosphoserine is present on residues serine 8 and serine 11. A helical transmembrane segment spans residues 43–64 (VLWAVAFVGSLGLLLVESSERV). Residues 65–424 (SYYFSYQHVT…ETIEQKKAYE (360 aa)) lie on the Extracellular side of the membrane. Cystine bridges form between cysteine 92–cysteine 193, cysteine 289–cysteine 364, cysteine 307–cysteine 360, cysteine 311–cysteine 358, cysteine 320–cysteine 342, and cysteine 322–cysteine 334. Residues asparagine 365 and asparagine 392 are each glycosylated (N-linked (GlcNAc...) asparagine). The helical transmembrane segment at 425-439 (VAALLGDIGGQMGLF) threads the bilayer. At 440 to 512 (IGASILTILE…TLGTLEEIAC (73 aa)) the chain is on the cytoplasmic side. Positions 441 to 443 (GAS) match the GAS motif; ion selectivity filter motif.

This sequence belongs to the amiloride-sensitive sodium channel (TC 1.A.6) family. ASIC2 subfamily. As to quaternary structure, can form homotrimers. Heterotrimer; forms functional heterotrimers producing channel with different properties. Forms heterotrimers with ASIC1; while ASIC1 determines current amplitude, ASIC2 influences the properties of the current. Forms heterotrimers with ASIC3; resulting in channels with distinct properties. Interacts with STOM; STOM regulates the gating of ASIC2-containing channels. Interacts with PICK1; promotes ASIC3 phosphorylation by PKC and activation of ASIC2/ASIC3 heterotrimers. In terms of tissue distribution, expressed in brain, cerebellum, trigeminal sensory ganglia and also detected in testis.

The protein resides in the cell membrane. The enzyme catalyses Na(+)(in) = Na(+)(out). It carries out the reaction K(+)(in) = K(+)(out). The catalysed reaction is Li(+)(in) = Li(+)(out). With respect to regulation, inhibited by the diuretic drug amiloride. Inhibited by gadolinium ions, the heterotrimer with ASIC3 being more sensitive. Heterotrimer composed of ASIC1 and ASIC2 are inhibited by the snake venom mambalgin-1. Functionally, forms pH-gated trimeric sodium channels that act as postsynaptic excitatory sensors in the nervous system. Upon extracellular acidification, these channels generate rapid, transient inward currents that fully desensitize. Highly selective for sodium, they are permeable to other cations. By forming heterotrimeric channels with ASIC1, could contribute to synaptic plasticity, learning, and memory. Additionally, as acid sensors at nerve terminals, plays a role in mechanosensation and phototransduction. The chain is Acid-sensing ion channel 2 from Homo sapiens (Human).